Consider the following 206-residue polypeptide: Thymidylate kinase (206 aa).

11–18 (GPEGAGKT) lines the ATP pocket.

The protein belongs to the thymidylate kinase family.

The catalysed reaction is dTMP + ATP = dTDP + ADP. Its function is as follows. Phosphorylation of dTMP to form dTDP in both de novo and salvage pathways of dTTP synthesis. This chain is Thymidylate kinase (tmk), found in Deinococcus radiodurans (strain ATCC 13939 / DSM 20539 / JCM 16871 / CCUG 27074 / LMG 4051 / NBRC 15346 / NCIMB 9279 / VKM B-1422 / R1).